The primary structure comprises 88 residues: Apolipoprotein C-I (88 aa).

The N-terminal stretch at 1–26 (MRLLISLPVLIVVLAMALEGPAPAQA) is a signal peptide.

Belongs to the apolipoprotein C1 family.

It is found in the secreted. Its function is as follows. Inhibitor of lipoprotein binding to the low density lipoprotein (LDL) receptor, LDL receptor-related protein, and very low density lipoprotein (VLDL) receptor. Associates with high density lipoproteins (HDL) and the triacylglycerol-rich lipoproteins in the plasma and makes up about 10% of the protein of the VLDL and 2% of that of HDL. Appears to interfere directly with fatty acid uptake and is also the major plasma inhibitor of cholesteryl ester transfer protein (CETP). Modulates the interaction of APOE with beta-migrating VLDL and inhibits binding of beta-VLDL to the LDL receptor-related protein. Binds free fatty acids and reduces their intracellular esterification. In Mesocricetus auratus (Golden hamster), this protein is Apolipoprotein C-I (APOC1).